The primary structure comprises 731 residues: 1,4-alpha-glucan branching enzyme GlgB (731 aa).

Aspartate 412 functions as the Nucleophile in the catalytic mechanism. The active-site Proton donor is glutamate 465.

The protein belongs to the glycosyl hydrolase 13 family. GlgB subfamily. As to quaternary structure, monomer.

It catalyses the reaction Transfers a segment of a (1-&gt;4)-alpha-D-glucan chain to a primary hydroxy group in a similar glucan chain.. It functions in the pathway glycan biosynthesis; glycogen biosynthesis. Functionally, catalyzes the formation of the alpha-1,6-glucosidic linkages in glycogen by scission of a 1,4-alpha-linked oligosaccharide from growing alpha-1,4-glucan chains and the subsequent attachment of the oligosaccharide to the alpha-1,6 position. This chain is 1,4-alpha-glucan branching enzyme GlgB, found in Bordetella parapertussis (strain 12822 / ATCC BAA-587 / NCTC 13253).